The following is a 434-amino-acid chain: Nicotinate phosphoribosyltransferase (434 aa).

At H242 the chain carries Phosphohistidine; by autocatalysis.

The protein belongs to the NAPRTase family. Transiently phosphorylated on a His residue during the reaction cycle. Phosphorylation strongly increases the affinity for substrates and increases the rate of nicotinate D-ribonucleotide production. Dephosphorylation regenerates the low-affinity form of the enzyme, leading to product release.

The catalysed reaction is nicotinate + 5-phospho-alpha-D-ribose 1-diphosphate + ATP + H2O = nicotinate beta-D-ribonucleotide + ADP + phosphate + diphosphate. Its pathway is cofactor biosynthesis; NAD(+) biosynthesis; nicotinate D-ribonucleotide from nicotinate: step 1/1. Functionally, catalyzes the synthesis of beta-nicotinate D-ribonucleotide from nicotinate and 5-phospho-D-ribose 1-phosphate at the expense of ATP. In Sinorhizobium medicae (strain WSM419) (Ensifer medicae), this protein is Nicotinate phosphoribosyltransferase.